Consider the following 705-residue polypeptide: MAAVKKIFDEIIETDHKVITEESSKSILKNYGVKVPPYALVTSAEEAAKEAKKIGFPLVMKVVSPQILHKTDVGGVKVGLDNVADVKKTFTDMYGRLSKKKGVNVKGILLEKMVPKGVELIVGIQNDSQFGPIIMVGMGGIMTEVMKDVAFRMLPITTSDAKSMLNELKGSKLLKGFRGSEPIDTNLVAKMLVNIGKLGVENADYINSIDFNPVIVYPKSHYVVDAKIILNKEKKKNSISKAKPSITDMETFFTPKSVALVGASASPGKIGNSILDSLVNYDFKGKVYPINPKADKIFGQKCYPSVADIPGKVDLVVVSVDLSMTPPVLEDCAKKGVHSVVIVSGGGKELGGERAAYEAEVARLSKKHKIRIIGPNCIGMFNAANRLDCAFQGQERMVRSKLGPVAFFSQSGTMGISMLESADTFGLSKMISFGNRSDVDEADMIWYAANDPQTKVIGLYVEGFGDGRKFINVAKRVMKEKKKPIVIWKSGRTAAGAKQAASHTGSLGGSNAIIMGAFKQAGIISVDSYQELAGVLKALAWQPAAKGNKVAMTSNGAGPMIGGIDQLEKFGLAIGKLSPKLLKKMKSRFPPAVPIHNGNPADVGGGATADDYQFVIQQFMDEKNIDIAMPWFVFQDDPLEETIVDHLAGFQKKAKKPLLCGGNGGPYTEKMIKLIEKHNVPVYQDLRTWVAAASALHQWGKISKK.

One can recognise an ATP-grasp domain in the interval 25–61 (KSILKNYGVKVPPYALVTSAEEAAKEAKKIGFPLVMK). 51 to 61 (AKKIGFPLVMK) provides a ligand contact to ATP.

In the N-terminal section; belongs to the acetate CoA ligase beta subunit family. It in the C-terminal section; belongs to the acetate CoA ligase alpha subunit family. The cofactor is Mg(2+). Requires Mn(2+) as cofactor.

It carries out the reaction 3-hydroxypropanoate + ATP + CoA = 3-hydroxypropanoyl-CoA + ADP + phosphate. Its function is as follows. Involved in thaumarchaeal hydroxypropionate/hydroxybutyrate (HP/HB) cycle, a modified version of the autotrophic HP/HB cycle of Crenarchaeota. Catalyzes the formation of 3-hydroxypropionyl-CoA, ADP and phosphate from 3-hydroxypropionate, coenzyme A (CoA) and ATP. Can also use 4-hydroxybutyrate, propionate and butyrate, with poor catalytic efficiency. The protein is 3-hydroxypropionate--CoA ligase [ADP-forming] of Nitrosopumilus maritimus (strain SCM1).